The chain runs to 136 residues: Invertebrate-type lysozyme (136 aa).

Residues 1–11 (METVSVEEGLD) form the signal peptide. In terms of domain architecture, I-type lysozyme spans 14-130 (PGMVSQKCLL…WELLQKIPGC (117 aa)). Intrachain disulfides connect Cys21–Cys98, Cys24–Cys130, Cys26–Cys33, Cys38–Cys47, Cys60–Cys80, Cys70–Cys76, and Cys94–Cys112. Residue Glu29 is the Proton donor of the active site. The active-site Nucleophile is Asp41. Residue 53–59 (KQPYWID) coordinates substrate. The N-linked (GlcNAc...) asparagine glycan is linked to Asn75. Substrate is bound by residues Tyr84, Tyr92, 105–107 (HNG), and Lys119.

Homodimer in its autoinhibited state. Active as monomer.

It localises to the secreted. The catalysed reaction is Hydrolysis of (1-&gt;4)-beta-linkages between N-acetylmuramic acid and N-acetyl-D-glucosamine residues in a peptidoglycan and between N-acetyl-D-glucosamine residues in chitodextrins.. Its activity is regulated as follows. Chitinase activity is activated by high salt concentrations which cause the release of the monomer from the autoinhibited homodimer. Bacteriolytic activity against Gram-positive bacterium M.luteus and thereby probably protects against bacterial infection. Also has chitinase activity. May act as an ispopeptidase, cleaving isopeptide bonds between the side chains of Lys and Gln residues in proteins or in the cross-linking peptide of peptidoglycan in bacterial cell walls. The sequence is that of Invertebrate-type lysozyme from Ruditapes philippinarum (Japanese carpet shell).